Consider the following 710-residue polypeptide: Low-temperature-induced 78 kDa protein (710 aa).

3 disordered regions span residues 1 to 198 (MDQT…LDGQ), 225 to 269 (YQSK…RDLS), and 305 to 507 (GFGD…STYT). The segment covering 14–25 (QHPEEVEHHENG) has biased composition (basic and acidic residues). Over residues 29-41 (MFRKVKARAKKFK) the composition is skewed to basic residues. Residues 49 to 58 (QSNEHEQDHD) are compositionally biased toward basic and acidic residues. The span at 59–73 (LVEEDDDDDELEPEV) shows a compositional bias: acidic residues. Residues 138–168 (SDKEEKRDVPIHHPLSELSDREESRETHHES) are compositionally biased toward basic and acidic residues. A compositionally biased stretch (polar residues) spans 169–187 (LNTPVSLLSGTEDVTSTFA). A run of 5 repeats spans residues 303-316 (PVGF…ELEK), 317-331 (DFPT…KTET), 336-350 (NSPS…KTES), 357-370 (PMGF…ELEK), and 398-412 (NFPV…KNES). Residues 303-370 (PVGFGDESGA…GSESGAELEK (68 aa)) are 2 X 14 AA repeats of P-[MV]-G-F-G-[DS]-E-S-G-A-E-L-E-K. 6 stretches are compositionally biased toward basic and acidic residues: residues 313–331 (ELEK…KTET), 340–352 (RSHE…ESGN), 367–380 (ELEK…DSGR), 402–418 (RSHE…DKDV), 442–466 (EDKF…KTET), and 475–487 (SHPK…KESR). Positions 317 to 412 (DFPTRSHDFD…SHELDLKNES (96 aa)) are 3 X 15 AA repeats of [DN]-[FS]-P-[STV]-R-S-H-[DE]-[FL]-D-[LM]-K-[NT]-E-[ST]. 3 consecutive repeat copies span residues 510–514 (FASML), 532–536 (VDEKL), and 550–554 (VTTKL). A 5 X 5 AA repeats of [FV]-[ADT]-[EST]-[KM]-L region spans residues 510–600 (FASMLGYSGE…AFSDMVAEKL (91 aa)). The tract at residues 537–577 (TPVNEKDQETESAVTTKLPISGGGSGVEEQRGEDKSVSGRD) is disordered. Positions 564–577 (EEQRGEDKSVSGRD) are enriched in basic and acidic residues. A run of 2 repeats spans residues 579–583 (VAEKL) and 596–600 (VAEKL). Residues 601–710 (QIGGEEEKKE…STVVPVQKEL (110 aa)) are disordered. Residues 605 to 626 (EEEKKETTTKEVEKISTEKAAS) show a composition bias toward basic and acidic residues. Position 626 is a phosphoserine (serine 626). Gly residues predominate over residues 638 to 654 (GGGGMVGRIKGWFGGGA). 2 tandem repeats follow at residues 648–670 (GWFG…EEAP) and 674–696 (GWFG…EESP). Residues 648–696 (GWFGGGATDEVKPESPHSVEEAPKSSGWFGGGATEEVKPKSPHSVEESP) form a 2 X 23 AA repeats region. Composition is skewed to basic and acidic residues over residues 656–670 (DEVK…EEAP) and 682–693 (EEVKPKSPHSVE).

This sequence belongs to the LTI78/LTI65 family. As to expression, accumulates rapidly in leaves, stems, roots, flower petals, filaments, and sepals during cold-acclimation.

The protein localises to the cytoplasm. In terms of biological role, involved in responses to abiotic stresses. Regulates probably root elongation in cold conditions. The protein is Low-temperature-induced 78 kDa protein of Arabidopsis thaliana (Mouse-ear cress).